Here is a 410-residue protein sequence, read N- to C-terminus: Na(+)/H(+) antiporter NhaA 1/4 (410 aa).

A run of 11 helical transmembrane segments spans residues 16-36 (VGGS…NSPL), 55-75 (LNLS…FFIV), 95-115 (ALPI…FLAF), 125-145 (GGWG…LAVV), 156-176 (FLLT…AVAC), 178-198 (SGIN…FGYL), 215-235 (AWLL…ACGV), 275-295 (IALP…AGGF), 299-319 (AITW…IFGG), 340-360 (IAGI…IAEL), and 371-391 (AKGA…LLLG).

This sequence belongs to the NhaA Na(+)/H(+) (TC 2.A.33) antiporter family.

It localises to the cell membrane. It catalyses the reaction Na(+)(in) + 2 H(+)(out) = Na(+)(out) + 2 H(+)(in). Na(+)/H(+) antiporter that extrudes sodium in exchange for external protons. In Streptomyces coelicolor (strain ATCC BAA-471 / A3(2) / M145), this protein is Na(+)/H(+) antiporter NhaA 1/4.